The primary structure comprises 476 residues: Adenosylhomocysteinase (476 aa).

The substrate site is built by Thr67, Asp142, and Glu202. 203-205 (TTT) contributes to the NAD(+) binding site. Substrate contacts are provided by Lys232 and Asp236. Residues Asn237, 266-271 (GYGDVG), Glu289, Asn324, 345-347 (IGH), and Asn390 contribute to the NAD(+) site.

The protein belongs to the adenosylhomocysteinase family. NAD(+) serves as cofactor.

The protein localises to the cytoplasm. It carries out the reaction S-adenosyl-L-homocysteine + H2O = L-homocysteine + adenosine. It functions in the pathway amino-acid biosynthesis; L-homocysteine biosynthesis; L-homocysteine from S-adenosyl-L-homocysteine: step 1/1. Its function is as follows. May play a key role in the regulation of the intracellular concentration of adenosylhomocysteine. The sequence is that of Adenosylhomocysteinase from Synechococcus sp. (strain CC9902).